The chain runs to 749 residues: Transcription factor RFX3 (749 aa).

The segment at residues 183–258 is a DNA-binding region (RFX-type winged-helix); that stretch reads HLQWLLDNYE…YHYYGIRVKP (76 aa). The tract at residues 663–699 is disordered; sequence VSPGNLDKDEGSEVESEMDEELDDSSEPQAKREKTEL. The span at 674 to 688 shows a compositional bias: acidic residues; that stretch reads SEVESEMDEELDDSS.

The protein belongs to the RFX family. In terms of assembly, heterodimer; heterodimerizes with RFX1 and RFX2, and RFX6.

It is found in the nucleus. In terms of biological role, transcription factor required for ciliogenesis and islet cell differentiation during endocrine pancreas development. Essential for the differentiation of nodal monocilia and left-right asymmetry specification during embryogenesis. Required for the biogenesis of motile cilia by governing growth and beating efficiency of motile cells. Also required for ciliated ependymal cell differentiation. Regulates the expression of genes involved in ciliary assembly (DYNC2LI1, FOXJ1 and BBS4) and genes involved in ciliary motility (DNAH11, DNAH9 and DNAH5). Together with RFX6, participates in the differentiation of 4 of the 5 islet cell types during endocrine pancreas development, with the exception of pancreatic PP (polypeptide-producing) cells. Regulates transcription by forming a heterodimer with another RFX protein and binding to the X-box in the promoter of target genes. Represses transcription of MAP1A in non-neuronal cells but not in neuronal cells. The chain is Transcription factor RFX3 (RFX3) from Macaca fascicularis (Crab-eating macaque).